An 88-amino-acid polypeptide reads, in one-letter code: Small ribosomal subunit protein uS15 (88 aa).

The protein belongs to the universal ribosomal protein uS15 family. As to quaternary structure, part of the 30S ribosomal subunit. Forms a bridge to the 50S subunit in the 70S ribosome, contacting the 23S rRNA.

One of the primary rRNA binding proteins, it binds directly to 16S rRNA where it helps nucleate assembly of the platform of the 30S subunit by binding and bridging several RNA helices of the 16S rRNA. In terms of biological role, forms an intersubunit bridge (bridge B4) with the 23S rRNA of the 50S subunit in the ribosome. The chain is Small ribosomal subunit protein uS15 from Albidiferax ferrireducens (strain ATCC BAA-621 / DSM 15236 / T118) (Rhodoferax ferrireducens).